The chain runs to 313 residues: 4-hydroxy-3-methylbut-2-enyl diphosphate reductase (313 aa).

Residue Cys-12 coordinates [4Fe-4S] cluster. (2E)-4-hydroxy-3-methylbut-2-enyl diphosphate-binding residues include His-41 and His-74. His-41 and His-74 together coordinate dimethylallyl diphosphate. The isopentenyl diphosphate site is built by His-41 and His-74. Cys-96 provides a ligand contact to [4Fe-4S] cluster. Residue His-124 participates in (2E)-4-hydroxy-3-methylbut-2-enyl diphosphate binding. His-124 is a dimethylallyl diphosphate binding site. Isopentenyl diphosphate is bound at residue His-124. Glu-126 serves as the catalytic Proton donor. Thr-167 contacts (2E)-4-hydroxy-3-methylbut-2-enyl diphosphate. Position 197 (Cys-197) interacts with [4Fe-4S] cluster. (2E)-4-hydroxy-3-methylbut-2-enyl diphosphate contacts are provided by Ser-225, Ser-226, Asn-227, and Ser-269. The dimethylallyl diphosphate site is built by Ser-225, Ser-226, Asn-227, and Ser-269. Isopentenyl diphosphate is bound by residues Ser-225, Ser-226, Asn-227, and Ser-269.

This sequence belongs to the IspH family. It depends on [4Fe-4S] cluster as a cofactor.

It catalyses the reaction isopentenyl diphosphate + 2 oxidized [2Fe-2S]-[ferredoxin] + H2O = (2E)-4-hydroxy-3-methylbut-2-enyl diphosphate + 2 reduced [2Fe-2S]-[ferredoxin] + 2 H(+). It carries out the reaction dimethylallyl diphosphate + 2 oxidized [2Fe-2S]-[ferredoxin] + H2O = (2E)-4-hydroxy-3-methylbut-2-enyl diphosphate + 2 reduced [2Fe-2S]-[ferredoxin] + 2 H(+). It functions in the pathway isoprenoid biosynthesis; dimethylallyl diphosphate biosynthesis; dimethylallyl diphosphate from (2E)-4-hydroxy-3-methylbutenyl diphosphate: step 1/1. It participates in isoprenoid biosynthesis; isopentenyl diphosphate biosynthesis via DXP pathway; isopentenyl diphosphate from 1-deoxy-D-xylulose 5-phosphate: step 6/6. In terms of biological role, catalyzes the conversion of 1-hydroxy-2-methyl-2-(E)-butenyl 4-diphosphate (HMBPP) into a mixture of isopentenyl diphosphate (IPP) and dimethylallyl diphosphate (DMAPP). Acts in the terminal step of the DOXP/MEP pathway for isoprenoid precursor biosynthesis. The sequence is that of 4-hydroxy-3-methylbut-2-enyl diphosphate reductase from Photobacterium profundum (strain SS9).